Consider the following 505-residue polypeptide: Katanin p60 ATPase-containing subunit A-like 2 (505 aa).

Residues 25-57 (RRKNLLILIMHYLLQEGYVDSANSLEQETKISS) form the LisH domain. 2 disordered regions span residues 94–127 (LDHDSRVQPKPRSAGKLRRAGSNSTQGLPRIGQQ) and 140–167 (RTNGHQKALSRENSKQESGGNSPQEASE). Composition is skewed to polar residues over residues 114–127 (GSNSTQGLPRIGQQ) and 155–164 (QESGGNSPQE). ATP is bound at residue 298-305 (GPPGTGKT).

This sequence belongs to the AAA ATPase family. Katanin p60 subunit A1 subfamily. A-like 2 sub-subfamily.

It is found in the cytoplasm. Its subcellular location is the cytoskeleton. The protein localises to the spindle. The protein resides in the spindle pole. The enzyme catalyses n ATP + n H2O + a microtubule = n ADP + n phosphate + (n+1) alpha/beta tubulin heterodimers.. In terms of biological role, severs microtubules in vitro in an ATP-dependent manner. This activity may promote rapid reorganization of cellular microtubule arrays. The protein is Katanin p60 ATPase-containing subunit A-like 2 (katnal2) of Xenopus laevis (African clawed frog).